Reading from the N-terminus, the 128-residue chain is uncharacterized protein (128 aa).

Basic and acidic residues predominate over residues 1 to 28; it reads MDADDFGKKDLENGNESPKKPIFMKDWK. The interval 1–30 is disordered; sequence MDADDFGKKDLENGNESPKKPIFMKDWKNS.

It is found in the cytoplasm. The protein localises to the nucleus. This is an uncharacterized protein from Schizosaccharomyces pombe (strain 972 / ATCC 24843) (Fission yeast).